The primary structure comprises 435 residues: MAKFGSRNKSPKWISNGCCFLLGAFTALLLLWGLCSFIIPIPNTDPKLNSVATSLRSLNFPKNPAATLPPNLQHDPPDTTFYDDPETSYTMDKPMKNWDEKRKEWLLHHPSFGAAARDKILLVTGSQPKRCHNPIGDHLLLRFFKNKVDYCRLHNYDIIYNNALLHPKMNSYWAKYPVIRAAMMAHPEVEWVWWVDSDAVFTDMEFKLPLKRYKNHNLVVHGWEGLVRLNHSWTGLNAGVFLIRNCQWSLEFMDVWVSMGPQTPEYEKWGERLRETFKDKVLPDSDDQTALAYLIATDNKDTWREKIFLESEYYFEGYWLEIVKTYENISERYDEVERKVEGLRRRHAEKVSEKYGAMREEYLKDNKRRPFITHFTGCQPCNGHHNPAYNANDCWNGMERALNFADNQILRTYGYHRQNLLDKSVSPLPFGYPAA.

At 1 to 20 (MAKFGSRNKSPKWISNGCCF) the chain is on the cytoplasmic side. A helical; Signal-anchor for type II membrane protein transmembrane segment spans residues 21 to 41 (LLGAFTALLLLWGLCSFIIPI). At 42 to 435 (PNTDPKLNSV…SPLPFGYPAA (394 aa)) the chain is on the lumenal side. 2 N-linked (GlcNAc...) asparagine glycosylation sites follow: Asn-230 and Asn-328. The stretch at 321-354 (EIVKTYENISERYDEVERKVEGLRRRHAEKVSEK) forms a coiled coil.

It belongs to the glycosyltransferase 34 family.

The protein localises to the golgi apparatus membrane. In terms of biological role, galactomannan galactosyltransferase (GMGT) involved in galactomannan biosynthesis in seed endosperm. GMGT specificity is an important factor regulating the distribution and amount of alpha-1,6-galactose (Gal) substitution of the beta-1,4-linked mannan backbone. The sequence is that of Galactomannan galactosyltransferase 1 (GMGT1) from Cyamopsis tetragonoloba (Guar).